Here is a 525-residue protein sequence, read N- to C-terminus: GMP synthase [glutamine-hydrolyzing] (525 aa).

Positions 9 to 207 (RILILDFGSQ…VQDICGCEAL (199 aa)) constitute a Glutamine amidotransferase type-1 domain. Cys86 acts as the Nucleophile in catalysis. Catalysis depends on residues His181 and Glu183. In terms of domain architecture, GMPS ATP-PPase spans 208–400 (WTPSNIVEDA…LGLPYDMVYR (193 aa)). Position 235 to 241 (235 to 241 (SGGVDSS)) interacts with ATP.

In terms of assembly, homodimer.

It carries out the reaction XMP + L-glutamine + ATP + H2O = GMP + L-glutamate + AMP + diphosphate + 2 H(+). It participates in purine metabolism; GMP biosynthesis; GMP from XMP (L-Gln route): step 1/1. In terms of biological role, catalyzes the synthesis of GMP from XMP. The sequence is that of GMP synthase [glutamine-hydrolyzing] from Pseudomonas putida (strain W619).